We begin with the raw amino-acid sequence, 883 residues long: Serine/threonine-protein phosphatase BSL1 homolog (883 aa).

Kelch repeat units lie at residues Ala64 to Thr113, Met221 to Gly271, Arg273 to Ala323, and Gln341 to His387. Disordered regions lie at residues Glu381–Lys402, Ser430–Pro466, and Asn499–Pro525. Residues Arg385 to Ser399 are compositionally biased toward polar residues. Residues Asp586, His588, Asp620, and Asn652 each contribute to the Mn(2+) site. His653 functions as the Proton donor in the catalytic mechanism. His705 and His784 together coordinate Mn(2+). A disordered region spans residues Gln861–Ile883. Residues Gln872–Ile883 are compositionally biased toward polar residues.

The protein belongs to the PPP phosphatase family. BSU subfamily. As to quaternary structure, interacts with the phosphorylated form of BSK3. Requires Mn(2+) as cofactor.

The protein localises to the nucleus. The enzyme catalyses O-phospho-L-seryl-[protein] + H2O = L-seryl-[protein] + phosphate. It catalyses the reaction O-phospho-L-threonyl-[protein] + H2O = L-threonyl-[protein] + phosphate. The chain is Serine/threonine-protein phosphatase BSL1 homolog (BSL1) from Oryza sativa subsp. japonica (Rice).